We begin with the raw amino-acid sequence, 218 residues long: Phosphatidylserine decarboxylase proenzyme (218 aa).

The active-site Schiff-base intermediate with substrate; via pyruvic acid is the Ser-182. Ser-182 carries the post-translational modification Pyruvic acid (Ser); by autocatalysis.

It belongs to the phosphatidylserine decarboxylase family. PSD-A subfamily. Heterodimer of a large membrane-associated beta subunit and a small pyruvoyl-containing alpha subunit. Pyruvate is required as a cofactor. In terms of processing, is synthesized initially as an inactive proenzyme. Formation of the active enzyme involves a self-maturation process in which the active site pyruvoyl group is generated from an internal serine residue via an autocatalytic post-translational modification. Two non-identical subunits are generated from the proenzyme in this reaction, and the pyruvate is formed at the N-terminus of the alpha chain, which is derived from the carboxyl end of the proenzyme. The post-translation cleavage follows an unusual pathway, termed non-hydrolytic serinolysis, in which the side chain hydroxyl group of the serine supplies its oxygen atom to form the C-terminus of the beta chain, while the remainder of the serine residue undergoes an oxidative deamination to produce ammonia and the pyruvoyl prosthetic group on the alpha chain.

It is found in the cell membrane. The enzyme catalyses a 1,2-diacyl-sn-glycero-3-phospho-L-serine + H(+) = a 1,2-diacyl-sn-glycero-3-phosphoethanolamine + CO2. It participates in phospholipid metabolism; phosphatidylethanolamine biosynthesis; phosphatidylethanolamine from CDP-diacylglycerol: step 2/2. In terms of biological role, catalyzes the formation of phosphatidylethanolamine (PtdEtn) from phosphatidylserine (PtdSer). The polypeptide is Phosphatidylserine decarboxylase proenzyme (Oleidesulfovibrio alaskensis (strain ATCC BAA-1058 / DSM 17464 / G20) (Desulfovibrio alaskensis)).